We begin with the raw amino-acid sequence, 311 residues long: Protein nfe2 (311 aa).

In terms of biological role, responsible for the nodulation efficiency and competitive ability of strain GR4 on alfalfa roots. In Rhizobium meliloti (Ensifer meliloti), this protein is Protein nfe2 (nfe2).